The sequence spans 220 residues: Probable glutathione S-transferase parA (220 aa).

The 80-residue stretch at 4–83 folds into the GST N-terminal domain; sequence NNVVLLDFWP…YIDEVWHDKC (80 aa). Glutathione is bound by residues S14, K41, I55, and 67–68; that span reads ES. The GST C-terminal domain occupies 89-209; the sequence is DPYERSQARF…LPHPHKIYGF (121 aa).

This sequence belongs to the GST superfamily. HSP26 family.

The catalysed reaction is RX + glutathione = an S-substituted glutathione + a halide anion + H(+). The chain is Probable glutathione S-transferase parA (PARA) from Nicotiana tabacum (Common tobacco).